The primary structure comprises 412 residues: Multifunctional CCA protein (412 aa).

ATP contacts are provided by glycine 8 and arginine 11. CTP is bound by residues glycine 8 and arginine 11. Mg(2+)-binding residues include aspartate 21 and aspartate 23. ATP-binding residues include arginine 91, arginine 137, and arginine 140. CTP-binding residues include arginine 91, arginine 137, and arginine 140. The HD domain occupies 228-329; it reads TGIHTLMTLS…VKLFDSIDAW (102 aa).

The protein belongs to the tRNA nucleotidyltransferase/poly(A) polymerase family. Bacterial CCA-adding enzyme type 1 subfamily. As to quaternary structure, monomer. Can also form homodimers and oligomers. It depends on Mg(2+) as a cofactor. Requires Ni(2+) as cofactor.

The enzyme catalyses a tRNA precursor + 2 CTP + ATP = a tRNA with a 3' CCA end + 3 diphosphate. It carries out the reaction a tRNA with a 3' CCA end + 2 CTP + ATP = a tRNA with a 3' CCACCA end + 3 diphosphate. Catalyzes the addition and repair of the essential 3'-terminal CCA sequence in tRNAs without using a nucleic acid template. Adds these three nucleotides in the order of C, C, and A to the tRNA nucleotide-73, using CTP and ATP as substrates and producing inorganic pyrophosphate. tRNA 3'-terminal CCA addition is required both for tRNA processing and repair. Also involved in tRNA surveillance by mediating tandem CCA addition to generate a CCACCA at the 3' terminus of unstable tRNAs. While stable tRNAs receive only 3'-terminal CCA, unstable tRNAs are marked with CCACCA and rapidly degraded. This is Multifunctional CCA protein from Escherichia coli (strain SE11).